A 180-amino-acid chain; its full sequence is Ribulose bisphosphate carboxylase small subunit, chloroplastic 2 (180 aa).

The N-terminal 56 residues, 1-56, are a transit peptide targeting the chloroplast; the sequence is MASSVLSSAAVATVSRTPAQASMVAPFTGLKSTVGFPATKKNDDITSLASNGGRVQ.

Belongs to the RuBisCO small chain family. Heterohexadecamer of 8 large and 8 small subunits.

The protein localises to the plastid. It localises to the chloroplast. Functionally, ruBisCO catalyzes two reactions: the carboxylation of D-ribulose 1,5-bisphosphate, the primary event in carbon dioxide fixation, as well as the oxidative fragmentation of the pentose substrate. Both reactions occur simultaneously and in competition at the same active site. Although the small subunit is not catalytic it is essential for maximal activity. The chain is Ribulose bisphosphate carboxylase small subunit, chloroplastic 2 from Spinacia oleracea (Spinach).